Reading from the N-terminus, the 306-residue chain is Aspartate carbamoyltransferase catalytic subunit (306 aa).

Residues Arg-54 and Thr-55 each coordinate carbamoyl phosphate. Lys-83 serves as a coordination point for L-aspartate. Carbamoyl phosphate is bound by residues Arg-104, His-132, and Gln-135. L-aspartate contacts are provided by Arg-165 and Arg-227. 2 residues coordinate carbamoyl phosphate: Leu-266 and Pro-267.

It belongs to the aspartate/ornithine carbamoyltransferase superfamily. ATCase family. In terms of assembly, heterododecamer (2C3:3R2) of six catalytic PyrB chains organized as two trimers (C3), and six regulatory PyrI chains organized as three dimers (R2).

It catalyses the reaction carbamoyl phosphate + L-aspartate = N-carbamoyl-L-aspartate + phosphate + H(+). Its pathway is pyrimidine metabolism; UMP biosynthesis via de novo pathway; (S)-dihydroorotate from bicarbonate: step 2/3. In terms of biological role, catalyzes the condensation of carbamoyl phosphate and aspartate to form carbamoyl aspartate and inorganic phosphate, the committed step in the de novo pyrimidine nucleotide biosynthesis pathway. This chain is Aspartate carbamoyltransferase catalytic subunit, found in Clostridium kluyveri (strain NBRC 12016).